Reading from the N-terminus, the 222-residue chain is Triosephosphate isomerase (222 aa).

Residue 9 to 11 (NYK) participates in substrate binding. H93 functions as the Electrophile in the catalytic mechanism. E141 acts as the Proton acceptor in catalysis. Substrate-binding positions include I146, G181, and 202–203 (AS).

Belongs to the triosephosphate isomerase family. In terms of assembly, homotetramer; dimer of dimers.

Its subcellular location is the cytoplasm. It carries out the reaction D-glyceraldehyde 3-phosphate = dihydroxyacetone phosphate. Its pathway is carbohydrate biosynthesis; gluconeogenesis. The protein operates within carbohydrate degradation; glycolysis; D-glyceraldehyde 3-phosphate from glycerone phosphate: step 1/1. Its function is as follows. Involved in the gluconeogenesis. Catalyzes stereospecifically the conversion of dihydroxyacetone phosphate (DHAP) to D-glyceraldehyde-3-phosphate (G3P). In Methanosarcina barkeri (strain Fusaro / DSM 804), this protein is Triosephosphate isomerase.